Reading from the N-terminus, the 307-residue chain is Nucleotide-binding protein AAur_2084 (307 aa).

Positions 1–21 are disordered; it reads MDEATAKSGTEQDGLTPVKPP. 30–37 serves as a coordination point for ATP; sequence GMSGAGRS. 81-84 provides a ligand contact to GTP; sequence DVRS.

Belongs to the RapZ-like family.

In terms of biological role, displays ATPase and GTPase activities. This is Nucleotide-binding protein AAur_2084 from Paenarthrobacter aurescens (strain TC1).